The sequence spans 1059 residues: Protein cappuccino (1059 aa).

2 stretches are compositionally biased toward polar residues: residues 62 to 80 (AAVT…NESG) and 90 to 123 (ATTS…SAAS). Disordered stretches follow at residues 62 to 146 (AAVT…GTPT) and 448 to 647 (QTES…TAPP). A compositionally biased stretch (pro residues) spans 133-142 (LPLPPPPPGF). A compositionally biased stretch (basic and acidic residues) spans 468–481 (SDNESAKEDGEKPH). The FH1 domain maps to 480-560 (PHAVAPPPPP…PPPPMSASPS (81 aa)). Over residues 483-541 (VAPPPPPPPPPLHAFVAPPPPPPPPPPPPPPLANYGAPPPPPPPPPGSGSAPPPPPPAP) the composition is skewed to pro residues. Residues 585 to 1032 (RKSAVNPPKP…KKSKQAQIES (448 aa)) form the FH2 domain. The segment covering 620–629 (TDSTENSGSS) has biased composition (polar residues). Residues 1049-1059 (KERMLMRRSKN) form an important for interaction with spir region.

This sequence belongs to the formin homology family. Cappuccino subfamily. In terms of assembly, interacts with wash. Interacts with spir.

The protein resides in the cytoplasm. It localises to the cytoskeleton. It is found in the cytosol. The protein localises to the membrane. Its subcellular location is the cytoplasmic vesicle membrane. Its function is as follows. Acts as an actin nucleation factor and promotes assembly of actin filaments together with spir. May play a role in intracellular vesicle transport along actin fibers, providing a novel link between actin cytoskeleton dynamics and intracellular transport. In Drosophila melanogaster (Fruit fly), this protein is Protein cappuccino (capu).